Here is a 356-residue protein sequence, read N- to C-terminus: Holliday junction branch migration complex subunit RuvB (356 aa).

The tract at residues 4-190 (TDKLAAERII…FGIVARLEFY (187 aa)) is large ATPase domain (RuvB-L). ATP contacts are provided by residues L29, R30, G71, K74, T75, T76, 137 to 139 (EDY), R180, Y190, and R227. T75 contributes to the Mg(2+) binding site. The small ATPAse domain (RuvB-S) stretch occupies residues 191–261 (DAEQLSRIVR…VADAALAMLD (71 aa)). The tract at residues 264–356 (PVGFDLMDRK…NLWDTPDAER (93 aa)) is head domain (RuvB-H). DNA contacts are provided by R300, R319, and R324.

Belongs to the RuvB family. In terms of assembly, homohexamer. Forms an RuvA(8)-RuvB(12)-Holliday junction (HJ) complex. HJ DNA is sandwiched between 2 RuvA tetramers; dsDNA enters through RuvA and exits via RuvB. An RuvB hexamer assembles on each DNA strand where it exits the tetramer. Each RuvB hexamer is contacted by two RuvA subunits (via domain III) on 2 adjacent RuvB subunits; this complex drives branch migration. In the full resolvosome a probable DNA-RuvA(4)-RuvB(12)-RuvC(2) complex forms which resolves the HJ.

It localises to the cytoplasm. It catalyses the reaction ATP + H2O = ADP + phosphate + H(+). The RuvA-RuvB-RuvC complex processes Holliday junction (HJ) DNA during genetic recombination and DNA repair, while the RuvA-RuvB complex plays an important role in the rescue of blocked DNA replication forks via replication fork reversal (RFR). RuvA specifically binds to HJ cruciform DNA, conferring on it an open structure. The RuvB hexamer acts as an ATP-dependent pump, pulling dsDNA into and through the RuvAB complex. RuvB forms 2 homohexamers on either side of HJ DNA bound by 1 or 2 RuvA tetramers; 4 subunits per hexamer contact DNA at a time. Coordinated motions by a converter formed by DNA-disengaged RuvB subunits stimulates ATP hydrolysis and nucleotide exchange. Immobilization of the converter enables RuvB to convert the ATP-contained energy into a lever motion, pulling 2 nucleotides of DNA out of the RuvA tetramer per ATP hydrolyzed, thus driving DNA branch migration. The RuvB motors rotate together with the DNA substrate, which together with the progressing nucleotide cycle form the mechanistic basis for DNA recombination by continuous HJ branch migration. Branch migration allows RuvC to scan DNA until it finds its consensus sequence, where it cleaves and resolves cruciform DNA. The polypeptide is Holliday junction branch migration complex subunit RuvB (Burkholderia thailandensis (strain ATCC 700388 / DSM 13276 / CCUG 48851 / CIP 106301 / E264)).